We begin with the raw amino-acid sequence, 142 residues long: HTH-type transcriptional regulator MntR (142 aa).

The 63-residue stretch at 1 to 63 folds into the HTH dtxR-type domain; the sequence is MPTPSMEDYI…YEKYRGLVLT (63 aa). The Mn(2+) site is built by aspartate 8, glutamate 11, histidine 77, glutamate 99, glutamate 102, and histidine 103.

The protein belongs to the DtxR/MntR family. In terms of assembly, homodimer.

Its subcellular location is the cytoplasm. Its activity is regulated as follows. DNA binding is strongly activated by Mn(2+). Functionally, central regulator of manganese homeostasis. The chain is HTH-type transcriptional regulator MntR from Bacillus cytotoxicus (strain DSM 22905 / CIP 110041 / 391-98 / NVH 391-98).